An 827-amino-acid chain; its full sequence is Zinc phosphodiesterase ELAC protein 2 (827 aa).

Residues 1–16 (MWALRSLLRPLGLRTM) constitute a mitochondrion transit peptide. 2 disordered regions span residues 15-46 (TMSQ…GWGP) and 181-220 (SERR…QCLP). Basic and acidic residues predominate over residues 181–192 (SERRCGEQEPSR). 6 positions are modified to phosphoserine: Ser193, Ser197, Ser202, Ser207, Ser617, and Ser735. The segment covering 199–210 (NRLSPKQSSSDP) has biased composition (polar residues). The tract at residues 794–827 (LTQQADSSEDREPHQKRAHSEEPHSPQSKKVRAQ) is disordered. Position 795 is a phosphothreonine (Thr795). The residue at position 800 (Ser800) is a Phosphoserine. Residues 801 to 817 (SEDREPHQKRAHSEEPH) show a composition bias toward basic and acidic residues. Ser818 is subject to Phosphoserine.

This sequence belongs to the RNase Z family. Homodimer. Interacts with PTCD1. Requires Zn(2+) as cofactor.

It localises to the mitochondrion. The protein resides in the mitochondrion matrix. The protein localises to the mitochondrion nucleoid. It is found in the nucleus. It catalyses the reaction Endonucleolytic cleavage of RNA, removing extra 3' nucleotides from tRNA precursor, generating 3' termini of tRNAs. A 3'-hydroxy group is left at the tRNA terminus and a 5'-phosphoryl group is left at the trailer molecule.. Its function is as follows. Zinc phosphodiesterase, which displays mitochondrial tRNA 3'-processing endonuclease activity. Involved in tRNA maturation, by removing a 3'-trailer from precursor tRNA. Associates with mitochondrial DNA complexes at the nucleoids to initiate RNA processing and ribosome assembly. This Rattus norvegicus (Rat) protein is Zinc phosphodiesterase ELAC protein 2 (Elac2).